Reading from the N-terminus, the 922-residue chain is Lysine-specific demethylase 7A (922 aa).

The PHD-type zinc finger occupies 6–57 (PVYCVCRQPYDVSRFMIECDICKDWFHSSCVKVEEHQAADIDLYHCPNCEVL). The JmjC domain maps to 199–355 (FSDTKMADLV…MQLRCYEMEK (157 aa)). A substrate-binding site is contributed by T248. Fe cation contacts are provided by H251 and D253. A substrate-binding site is contributed by K268. H323 is a binding site for Fe cation. Disordered stretches follow at residues 445–490 (EEEG…TKTP), 565–607 (RSLY…TQKP), 622–711 (GSSE…EQEA), 754–773 (GKEH…HHVK), and 872–902 (LHPT…MATA). Basic residues predominate over residues 473 to 483 (HHSGRKARRLR). Over residues 648 to 666 (ESESSGDDDDEEEEEEEER) the composition is skewed to acidic residues. Basic and acidic residues-rich tracts occupy residues 667 to 683 (QEPI…RRLP) and 691 to 701 (PDHDSPQKREC).

Belongs to the JHDM1 histone demethylase family. JHDM1D subfamily. Fe(2+) is required as a cofactor.

The protein localises to the nucleus. Its function is as follows. Histone demethylase required for brain development. Specifically demethylates dimethylated 'Lys-9' and 'Lys-27' (H3K9me2 and H3K27me2, respectively) of histone H3 and monomethylated histone H4 'Lys-20' residue (H4K20Me1), thereby playing a central role in histone code. The protein is Lysine-specific demethylase 7A (kdm7a) of Xenopus tropicalis (Western clawed frog).